A 459-amino-acid chain; its full sequence is Chromosomal replication initiator protein DnaA (459 aa).

Positions 1 to 74 are domain I, interacts with DnaA modulators; the sequence is MQKIETFWHF…DEMAQDHFNE (74 aa). Residues 74 to 122 are domain II; that stretch reads ERISFRLELREPAESEAQTVRTSAQKNREDKKPAAEKTQGVTSRKTNPS. A disordered region spans residues 87 to 122; sequence ESEAQTVRTSAQKNREDKKPAAEKTQGVTSRKTNPS. Positions 89–98 are enriched in polar residues; the sequence is EAQTVRTSAQ. Over residues 99–108 the composition is skewed to basic and acidic residues; that stretch reads KNREDKKPAA. Over residues 112-122 the composition is skewed to polar residues; the sequence is QGVTSRKTNPS. Positions 123-339 are domain III, AAA+ region; the sequence is QLNASFTFDA…GALKRVLAFS (217 aa). The ATP site is built by G167, G169, K170, and T171. Positions 340 to 459 are domain IV, binds dsDNA; sequence RFTGHSISLD…FNALMHILRG (120 aa).

It belongs to the DnaA family. As to quaternary structure, oligomerizes as a right-handed, spiral filament on DNA at oriC.

Its subcellular location is the cytoplasm. In terms of biological role, plays an essential role in the initiation and regulation of chromosomal replication. ATP-DnaA binds to the origin of replication (oriC) to initiate formation of the DNA replication initiation complex once per cell cycle. Binds the DnaA box (a 9 base pair repeat at the origin) and separates the double-stranded (ds)DNA. Forms a right-handed helical filament on oriC DNA; dsDNA binds to the exterior of the filament while single-stranded (ss)DNA is stabiized in the filament's interior. The ATP-DnaA-oriC complex binds and stabilizes one strand of the AT-rich DNA unwinding element (DUE), permitting loading of DNA polymerase. After initiation quickly degrades to an ADP-DnaA complex that is not apt for DNA replication. Binds acidic phospholipids. The polypeptide is Chromosomal replication initiator protein DnaA (Nitrosomonas europaea (strain ATCC 19718 / CIP 103999 / KCTC 2705 / NBRC 14298)).